Here is a 253-residue protein sequence, read N- to C-terminus: Tropomyosin-1 (253 aa).

A coiled-coil region spans residues Val7 to Gln253.

It belongs to the tropomyosin family. As to quaternary structure, homodimer.

Functionally, tropomyosin, in association with the troponin complex, plays a central role in the calcium dependent regulation of muscle contraction. In Hydra vulgaris (Hydra), this protein is Tropomyosin-1 (TROP1).